The sequence spans 88 residues: Small ribosomal subunit protein bS18 (88 aa).

Over residues 1–11 (MTTANTTAKDN) the composition is skewed to low complexity. A disordered region spans residues 1–21 (MTTANTTAKDNAATKKRGRKA).

The protein belongs to the bacterial ribosomal protein bS18 family. Part of the 30S ribosomal subunit. Forms a tight heterodimer with protein bS6.

Binds as a heterodimer with protein bS6 to the central domain of the 16S rRNA, where it helps stabilize the platform of the 30S subunit. The protein is Small ribosomal subunit protein bS18 of Thermoanaerobacter pseudethanolicus (strain ATCC 33223 / 39E) (Clostridium thermohydrosulfuricum).